The sequence spans 183 residues: Caspase recruitment domain-containing protein 19 (183 aa).

A disulfide bridge connects residues C7 and C77. One can recognise a CARD domain in the interval 8–99 (DRLVQDTPFL…PLHSCLPSRH (92 aa)). A helical membrane pass occupies residues 122–142 (GPVAFLTCLGLAAGLALLIYC).

In terms of assembly, associates with BCL10 by CARD-CARD interaction.

The protein localises to the endoplasmic reticulum membrane. It is found in the mitochondrion membrane. Its function is as follows. Plays a role in inhibiting the effects of BCL10-induced activation of NF-kappa-B. May inhibit the phosphorylation of BCL10 in a CARD-dependent manner. This is Caspase recruitment domain-containing protein 19 (CARD19) from Bos taurus (Bovine).